The sequence spans 216 residues: Somatotropin (216 aa).

A signal peptide spans 1–26; the sequence is MAADPQSSVLLAFALLCLPWPQEVGA. H45 lines the Zn(2+) pocket. Residues C78 and C189 are joined by a disulfide bond. The residue at position 131 (S131) is a Phosphoserine. Position 198 (E198) interacts with Zn(2+). C206 and C214 are disulfide-bonded.

Belongs to the somatotropin/prolactin family.

The protein localises to the secreted. Its function is as follows. Plays an important role in growth control. Its major role in stimulating body growth is to stimulate the liver and other tissues to secrete IGF1. It stimulates both the differentiation and proliferation of myoblasts. It also stimulates amino acid uptake and protein synthesis in muscle and other tissues. This is Somatotropin (GH1) from Ailuropoda melanoleuca (Giant panda).